Reading from the N-terminus, the 622-residue chain is Prolactin receptor (622 aa).

A signal peptide spans 1–24; it reads MKENVASATVFTLLLFLNTCLLNG. At 25-234 the chain is on the extracellular side; the sequence is QLPPGKPEIF…QIPSDFTMND (210 aa). Fibronectin type-III domains are found at residues 27 to 128 and 129 to 229; these read PPGK…VQPD and PPLE…IPSD. Residues Cys-36 and Cys-46 are joined by a disulfide bond. Residue Asn-59 is glycosylated (N-linked (GlcNAc...) asparagine). Cys-75 and Cys-86 form a disulfide bridge. N-linked (GlcNAc...) asparagine glycosylation occurs at Asn-104. 2 residues coordinate Zn(2+): Asp-211 and His-212. A WSXWS motif motif is present at residues 215-219; the sequence is WSAWS. Asn-233 is a glycosylation site (N-linked (GlcNAc...) asparagine). The helical transmembrane segment at 235–258 threads the bilayer; it reads TTVWISVAVLSAVICLIIVWAVAL. At 259 to 622 the chain is on the cytoplasmic side; it reads KGYSMVTCIF…DPACFTHSFH (364 aa). Positions 267–275 match the Box 1 motif motif; it reads IFPPVPGPK. Disordered regions lie at residues 326–378, 461–505, and 520–545; these read MSVH…YDPE, SSQT…GSAK, and ALSLLPKQRENSGKPKKPGTPENNKE. The span at 466–486 shows a compositional bias: basic and acidic residues; that stretch reads KSREEGKATQQREVESFHSET.

This sequence belongs to the type I cytokine receptor family. Type 1 subfamily. Homodimer upon hormone binding. Interacts with SMARCA1. Interacts with GH1. Interacts with CSH. Interacts with NEK3 and VAV2 and this interaction is prolactin-dependent. Expressed in breast, placenta, kidney, liver and pancreas.

The protein localises to the membrane. It localises to the secreted. Its function is as follows. This is a receptor for the anterior pituitary hormone prolactin (PRL). Acts as a prosurvival factor for spermatozoa by inhibiting sperm capacitation through suppression of SRC kinase activation and stimulation of AKT. Isoform 4 is unable to transduce prolactin signaling. Isoform 6 is unable to transduce prolactin signaling. The sequence is that of Prolactin receptor (PRLR) from Homo sapiens (Human).